Consider the following 665-residue polypeptide: MEPRVVKPPGQDLVVESLKSRYGLGGSCPDEYDFSNFYQSKYKRRTLTSPGDLDIYSGDKVGSSLKYSDESKHCRTPLGSLFKHVNVNCLDDELDSFHDLKKQETEEELIENDYRVSTSKITKQSFKEIEKVALPTNTTSSRPRTECCSDAGDSPLKPVSCPKSKASDKRSLLPHQISQIYDELFQIHLKLQCETAAQQKFAEELQKRERFLLEREQLLFRHENALSKIKGVEEEVLTRFQIIKEQHDAEVEHLTEVLKEKNKETKRLRSSFDALKELNDTLKKQLNEASEENRKIDIQAKRVQARLDNLQRKYEFMTIQRLKGSSHAVHEMKSLKQEKAPVSKTYKVPLNGQVYELLTVFMDWISDHHLSKVKHEESGMDGKKPQLKFASQRNDIQEKCVKLLPLMTEQLQWMPFVNIKLHEPFVKFIYWSLRQLDAGAQHSTMTSTLRRLGEDIFKGVVTKGIQDNSPQHSVENKPKTAAFFKSSNLPLRFLSTLIVLKTVTQADYLAQAFDSLCLDLKTEEGKTLFLEYQAVPVILSHLRISSKGLLSNVIDSLLQMTVESKSLQPFLEACSNSLFFRTCSVLLRAPKLDLQILEKLSIILQKLSKIKSNKKLFELFTIHLMLQEIQRTTNPEHAFLCINLNSTLFNLGLTKCNSLVSSASP.

The residue at position 48 (T48) is a Phosphothreonine. Residue S49 is modified to Phosphoserine. Residues 198 to 323 (QQKFAEELQK…YEFMTIQRLK (126 aa)) are a coiled coil. S469 is subject to Phosphoserine.

This chain is Coiled-coil domain-containing protein 138 (CCDC138), found in Homo sapiens (Human).